Consider the following 525-residue polypeptide: Asparagine synthetase [glutamine-hydrolyzing] (525 aa).

Cysteine 2 serves as the catalytic For GATase activity. The 184-residue stretch at 2–185 folds into the Glutamine amidotransferase type-2 domain; it reads CGILAVLGCS…PGHLYSSKEG (184 aa). L-glutamine is bound by residues 50–54, 75–77, and aspartate 98; these read RLAII and NGE. In terms of domain architecture, Asparagine synthetase spans 193 to 517; the sequence is PPWFSEVIPS…QIDSPWRSKC (325 aa). Residues leucine 231, valine 267, and 341–342 each bind ATP; that span reads SG.

The catalysed reaction is L-aspartate + L-glutamine + ATP + H2O = L-asparagine + L-glutamate + AMP + diphosphate + H(+). Its pathway is amino-acid biosynthesis; L-asparagine biosynthesis; L-asparagine from L-aspartate (L-Gln route): step 1/1. Its function is as follows. Could play a role in remobilization of nitrogen in flowers during senescence. This Sandersonia aurantiaca (Christmas-bells) protein is Asparagine synthetase [glutamine-hydrolyzing] (AND1).